The following is a 475-amino-acid chain: Histidine--tRNA ligase (475 aa).

The protein belongs to the class-II aminoacyl-tRNA synthetase family. As to quaternary structure, homodimer.

The protein resides in the cytoplasm. The catalysed reaction is tRNA(His) + L-histidine + ATP = L-histidyl-tRNA(His) + AMP + diphosphate + H(+). This Flavobacterium johnsoniae (strain ATCC 17061 / DSM 2064 / JCM 8514 / BCRC 14874 / CCUG 350202 / NBRC 14942 / NCIMB 11054 / UW101) (Cytophaga johnsonae) protein is Histidine--tRNA ligase.